The sequence spans 130 residues: Endoglucanase 2 (130 aa).

Active-site residues include histidine 47, aspartate 98, and glutamate 107.

This sequence belongs to the glycosyl hydrolase 9 (cellulase E) family.

The enzyme catalyses Endohydrolysis of (1-&gt;4)-beta-D-glucosidic linkages in cellulose, lichenin and cereal beta-D-glucans.. Its function is as follows. Involved in ripening fruit process. The protein is Endoglucanase 2 (CEL2) of Persea americana (Avocado).